Reading from the N-terminus, the 309-residue chain is Protein FdhE (309 aa).

This sequence belongs to the FdhE family.

It localises to the cytoplasm. In terms of biological role, necessary for formate dehydrogenase activity. This Salmonella dublin (strain CT_02021853) protein is Protein FdhE.